Reading from the N-terminus, the 311-residue chain is Aspartate carbamoyltransferase catalytic subunit (311 aa).

2 residues coordinate carbamoyl phosphate: Arg58 and Thr59. L-aspartate is bound at residue Lys86. Positions 108, 136, and 139 each coordinate carbamoyl phosphate. The L-aspartate site is built by Arg169 and Arg223. Carbamoyl phosphate contacts are provided by Gly264 and Pro265.

This sequence belongs to the aspartate/ornithine carbamoyltransferase superfamily. ATCase family. In terms of assembly, heterododecamer (2C3:3R2) of six catalytic PyrB chains organized as two trimers (C3), and six regulatory PyrI chains organized as three dimers (R2).

The enzyme catalyses carbamoyl phosphate + L-aspartate = N-carbamoyl-L-aspartate + phosphate + H(+). It functions in the pathway pyrimidine metabolism; UMP biosynthesis via de novo pathway; (S)-dihydroorotate from bicarbonate: step 2/3. Catalyzes the condensation of carbamoyl phosphate and aspartate to form carbamoyl aspartate and inorganic phosphate, the committed step in the de novo pyrimidine nucleotide biosynthesis pathway. This Acidiphilium cryptum (strain JF-5) protein is Aspartate carbamoyltransferase catalytic subunit.